A 290-amino-acid chain; its full sequence is Ribonuclease 3 (290 aa).

The RNase III domain maps to tyrosine 20–glycine 145. Glutamate 62 serves as a coordination point for Mg(2+). Aspartate 66 is an active-site residue. Asparagine 131 and glutamate 134 together coordinate Mg(2+). The active site involves glutamate 134. The DRBM domain maps to asparagine 173–glycine 242. Residues lysine 254 to valine 290 are disordered. Positions glutamate 267–isoleucine 279 are enriched in polar residues.

The protein belongs to the ribonuclease III family. In terms of assembly, homodimer. Mg(2+) is required as a cofactor.

The protein localises to the cytoplasm. The enzyme catalyses Endonucleolytic cleavage to 5'-phosphomonoester.. Its function is as follows. Digests double-stranded RNA. Involved in the processing of primary rRNA transcript to yield the immediate precursors to the large and small rRNAs (23S and 16S). Processes some mRNAs, and tRNAs when they are encoded in the rRNA operon. Processes pre-crRNA and tracrRNA of type II CRISPR loci if present in the organism. The chain is Ribonuclease 3 from Bacteroides fragilis (strain ATCC 25285 / DSM 2151 / CCUG 4856 / JCM 11019 / LMG 10263 / NCTC 9343 / Onslow / VPI 2553 / EN-2).